Consider the following 323-residue polypeptide: Pyruvate dehydrogenase E1 component subunit beta (323 aa).

Position 60 (Glu60) interacts with thiamine diphosphate. K(+) is bound by residues Ile113, Ala161, Ile162, Asp164, and Asn166.

Heterodimer of an alpha and a beta chain. The cofactor is thiamine diphosphate.

It is found in the plastid. The protein resides in the chloroplast. The enzyme catalyses N(6)-[(R)-lipoyl]-L-lysyl-[protein] + pyruvate + H(+) = N(6)-[(R)-S(8)-acetyldihydrolipoyl]-L-lysyl-[protein] + CO2. The pyruvate dehydrogenase complex catalyzes the overall conversion of pyruvate to acetyl-CoA and CO(2). It contains multiple copies of three enzymatic components: pyruvate dehydrogenase (E1), dihydrolipoamide acetyltransferase (E2) and lipoamide dehydrogenase (E3). This chain is Pyruvate dehydrogenase E1 component subunit beta (pdhB), found in Gracilaria tenuistipitata var. liui (Red alga).